The following is a 303-amino-acid chain: Trans-aconitate 2-methyltransferase (303 aa).

Positions glutamate 271–arginine 303 are disordered. Residues glycine 272–arginine 303 are compositionally biased toward gly residues.

It belongs to the methyltransferase superfamily. Tam family.

The protein localises to the cytoplasm. It catalyses the reaction trans-aconitate + S-adenosyl-L-methionine = (E)-3-(methoxycarbonyl)pent-2-enedioate + S-adenosyl-L-homocysteine. Its function is as follows. Catalyzes the S-adenosylmethionine monomethyl esterification of trans-aconitate. This chain is Trans-aconitate 2-methyltransferase, found in Streptomyces coelicolor (strain ATCC BAA-471 / A3(2) / M145).